Consider the following 100-residue polypeptide: UPF0251 protein VVA1436 (100 aa).

It belongs to the UPF0251 family.

This chain is UPF0251 protein VVA1436, found in Vibrio vulnificus (strain YJ016).